A 243-amino-acid chain; its full sequence is Adenylate dimethylallyltransferase (243 aa).

The enzyme catalyses dimethylallyl diphosphate + AMP = N(6)-(dimethylallyl)adenosine 5'-phosphate + diphosphate. Transfers dimethylallyl groups to AMP as part of the biosynthesis of cytokinin phytohormones. This is Adenylate dimethylallyltransferase (tzs) from Agrobacterium fabrum (strain C58 / ATCC 33970) (Agrobacterium tumefaciens (strain C58)).